The following is a 724-amino-acid chain: Protein Aster-A (724 aa).

Positions 1-18 (MFDTTPHSGRSTPSSSPS) are enriched in low complexity. The segment at 1 to 66 (MFDTTPHSGR…TPSTQSLGSR (66 aa)) is disordered. The span at 57–66 (TPSTQSLGSR) shows a compositional bias: polar residues. The GRAM domain occupies 91–158 (EDFRKLFSKL…KEVTCLKKEK (68 aa)). Residues 256 to 336 (SSGAADRSQE…GPTTLGPLDL (81 aa)) form a disordered region. Serine 263, serine 267, and serine 271 each carry phosphoserine. Positions 300-312 (DSQPDASSSQTVT) are enriched in polar residues. A compositionally biased stretch (low complexity) spans 326–336 (DGPTTLGPLDL). One can recognise a VASt domain in the interval 367-538 (SGRLLINSVF…ELAKAEKLSL (172 aa)). Serine 415 is modified (phosphoserine). Positions 560 to 579 (SWRAHGDGPQHPDPDPCARA) are disordered. Residues 563–575 (AHGDGPQHPDPDP) show a composition bias toward basic and acidic residues. Residues 610 to 630 (LISIVICVSLIILIALNVLLF) form a helical membrane-spanning segment.

Expressed in liver.

It is found in the endoplasmic reticulum membrane. It localises to the cell membrane. The protein localises to the cytoplasmic vesicle. Its subcellular location is the autophagosome. Functionally, cholesterol transporter that mediates non-vesicular transport of cholesterol from the plasma membrane (PM) to the endoplasmic reticulum (ER). Contains unique domains for binding cholesterol and the PM, thereby serving as a molecular bridge for the transfer of cholesterol from the PM to the ER. Plays a crucial role in cholesterol homeostasis and has the unique ability to localize to the PM based on the level of membrane cholesterol. In lipid-poor conditions localizes to the ER membrane and in response to excess cholesterol in the PM is recruited to the endoplasmic reticulum-plasma membrane contact sites (EPCS) which is mediated by the GRAM domain. At the EPCS, the sterol-binding VASt/ASTER domain binds to the cholesterol in the PM and facilitates its transfer from the PM to ER. May play a role in tumor progression. Plays a role in autophagy regulation and is required for biogenesis of the autophagosome. This function in autophagy requires its cholesterol-transfer activity. The chain is Protein Aster-A from Homo sapiens (Human).